A 628-amino-acid polypeptide reads, in one-letter code: Vacuolar-sorting receptor 3 (628 aa).

An N-terminal signal peptide occupies residues 1–24 (MKQLLCYLPWLLLLTLLVSPLNDA). Residues 25 to 569 (RFVVEKNSLS…SKTGAQVRSA (545 aa)) lie on the Lumenal side of the membrane. The PA domain occupies 56–168 (QYGGSMAGTV…GFGEKLKKAI (113 aa)). N-linked (GlcNAc...) asparagine glycans are attached at residues Asn-148, Asn-294, and Asn-434. EGF-like domains lie at 416-466 (ESNE…SHCE) and 469-516 (GPGR…KKCE). 7 disulfides stabilise this stretch: Cys-420–Cys-438, Cys-427–Cys-447, Cys-449–Cys-465, Cys-473–Cys-493, Cys-480–Cys-501, Cys-503–Cys-515, and Cys-545–Cys-558. The EGF-like 3; calcium-binding domain occupies 517 to 559 (DINECKEKKACQCPECSCKNTWGSYECSCSGDLLYIRDHDTCI). The helical transmembrane segment at 570 to 590 (WAAVWLIMLSLGLAAAGAYLV) threads the bilayer. At 591–628 (YKYRLRQYMDSEIRAIMAQYMPLDSQPEIPNHVNDERA) the chain is on the cytoplasmic side. Positions 610–613 (YMPL) match the Tyrosine-based internalization motif motif.

Belongs to the VSR (BP-80) family. In terms of tissue distribution, expressed in seeds, seedlings, roots, leaves, flowers and siliques.

It is found in the membrane. Its subcellular location is the golgi apparatus membrane. The protein resides in the cytoplasmic vesicle. The protein localises to the clathrin-coated vesicle membrane. It localises to the prevacuolar compartment membrane. Vacuolar-sorting receptor (VSR) involved in clathrin-coated vesicles sorting from Golgi apparatus to vacuoles. The protein is Vacuolar-sorting receptor 3 (VSR3) of Arabidopsis thaliana (Mouse-ear cress).